The following is a 681-amino-acid chain: Secretion system apparatus protein SsaV (681 aa).

Helical transmembrane passes span 24–44 (MVLA…LPTW), 48–68 (ILIT…IYLS), 73–93 (LSVF…LTIS), 118–138 (GNLT…FIVI), 206–226 (TIAG…IAIV), 244–264 (IGDG…AGII), and 295–315 (AVVL…LAFF).

This sequence belongs to the FHIPEP (flagella/HR/invasion proteins export pore) family.

It localises to the cell inner membrane. In terms of biological role, component of Salmonella pathogenicity island 2 (SPI-2) type III secretion system, required for secretion of some type III-secreted effectors including the SpvB exotoxin. This chain is Secretion system apparatus protein SsaV (ssaV), found in Salmonella typhimurium (strain 14028s / SGSC 2262).